The primary structure comprises 586 residues: Actin-related protein 9 (586 aa).

A disordered region spans residues 141–169 (STPIVDKDADVDPLQRSTPDDTEPNSEEN).

It belongs to the actin family. ARP8 subfamily.

This Oryza sativa subsp. japonica (Rice) protein is Actin-related protein 9 (ARP9).